The primary structure comprises 519 residues: Dideacetyl fusicoccin A C-19 hydroxylase (519 aa).

Residues 16–36 form a helical membrane-spanning segment; that stretch reads LPVAPILFTALAATIGAFLLS. N-linked (GlcNAc...) asparagine glycosylation is found at asparagine 177, asparagine 327, asparagine 414, and asparagine 432. Cysteine 454 is a binding site for heme.

Belongs to the cytochrome P450 family. Heme serves as cofactor.

It localises to the membrane. Its pathway is mycotoxin biosynthesis. Functionally, cytochrome P450 monooxygenase; part of the 2 gene clusters that mediate the biosynthesis of fusicoccins, diterpene glucosides that display phytohormone-like activity and function as potent activators of plasma membrane H(+)-ATPases in plants by modifying 14-3-3 proteins and cause the plant disease constriction canker. The first step in the pathway is performed by the fusicoccadiene synthase PaFS that possesses both prenyl transferase and terpene cyclase activity, converting isopentenyl diphosphate and dimethylallyl diphosphate into geranylgeranyl diphosphate (GGDP) and successively converting GGDP into fusicocca-2,10(14)-diene, a precursor for fusicoccin H. The second step is the oxidation at the C-8 position by the cytochrome P450 monooxygenase PaP450-2 to yield fusicocca-2,10(14)-diene-8-beta-ol. The cytochrome P450 monooxygenase PaP450-1 then catalyzes the hydroxylation at the C-16 position to produce fusicocca-2,10(14)-diene-8-beta,16-diol. The dioxygenase fc-dox then catalyzes the 16-oxydation of fusicocca-2,10(14)-diene-8-beta,16-diol to yield an aldehyde (8-beta-hydroxyfusicocca-1,10(14)-dien-16-al). The short-chain dehydrogenase/reductase fc-sdr catalyzes the reduction of the aldehyde to yield fusicocca-1,10(14)-diene-8-beta,16-diol. The next step is the hydroxylation at C-9 performed by the cytochrome P450 monooxygenase PaP450-3 that leads to fusicoccin H aglycon which is glycosylated to fusicoccin H by the O-glycosyltransferase PaGT. Hydroxylation at C-12 by the cytochrome P450 monooxygenase PaP450-4 leads then to the production of fusicoccin Q and is followed by methylation by the O-methyltransferase PaMT to yield fusicoccin P. Fusicoccin P is further converted to fusicoccin J via prenylation by the O-glucose prenyltransferase PaPT. Cytochrome P450 monooxygenase PaP450-5 then performs hydroxylation at C-19 to yield dideacetyl-fusicoccin A which is acetylated to 3'-O-deacetyl-fusicoccin A by the O-acetyltransferase PaAT-2. Finally, a another acetylation by the O-acetyltransferase PaAT-1 yields fusicoccin A. The protein is Dideacetyl fusicoccin A C-19 hydroxylase of Phomopsis amygdali (Fusicoccum amygdali).